The primary structure comprises 376 residues: UDP-N-acetylglucosamine--N-acetylmuramyl-(pentapeptide) pyrophosphoryl-undecaprenol N-acetylglucosamine transferase (376 aa).

UDP-N-acetyl-alpha-D-glucosamine is bound by residues 11-13 (TGG), Asn117, Arg160, Ser208, and Gln310.

The protein belongs to the glycosyltransferase 28 family. MurG subfamily.

The protein resides in the cell inner membrane. It catalyses the reaction di-trans,octa-cis-undecaprenyl diphospho-N-acetyl-alpha-D-muramoyl-L-alanyl-D-glutamyl-meso-2,6-diaminopimeloyl-D-alanyl-D-alanine + UDP-N-acetyl-alpha-D-glucosamine = di-trans,octa-cis-undecaprenyl diphospho-[N-acetyl-alpha-D-glucosaminyl-(1-&gt;4)]-N-acetyl-alpha-D-muramoyl-L-alanyl-D-glutamyl-meso-2,6-diaminopimeloyl-D-alanyl-D-alanine + UDP + H(+). It functions in the pathway cell wall biogenesis; peptidoglycan biosynthesis. Its function is as follows. Cell wall formation. Catalyzes the transfer of a GlcNAc subunit on undecaprenyl-pyrophosphoryl-MurNAc-pentapeptide (lipid intermediate I) to form undecaprenyl-pyrophosphoryl-MurNAc-(pentapeptide)GlcNAc (lipid intermediate II). This chain is UDP-N-acetylglucosamine--N-acetylmuramyl-(pentapeptide) pyrophosphoryl-undecaprenol N-acetylglucosamine transferase, found in Rickettsia conorii (strain ATCC VR-613 / Malish 7).